The chain runs to 202 residues: LexA repressor (202 aa).

A DNA-binding region (H-T-H motif) is located at residues Gln28–Val48. Active-site for autocatalytic cleavage activity residues include Ser120 and Lys157.

This sequence belongs to the peptidase S24 family. Homodimer.

The enzyme catalyses Hydrolysis of Ala-|-Gly bond in repressor LexA.. Functionally, represses a number of genes involved in the response to DNA damage (SOS response), including recA and lexA. In the presence of single-stranded DNA, RecA interacts with LexA causing an autocatalytic cleavage which disrupts the DNA-binding part of LexA, leading to derepression of the SOS regulon and eventually DNA repair. This chain is LexA repressor, found in Syntrophotalea carbinolica (strain DSM 2380 / NBRC 103641 / GraBd1) (Pelobacter carbinolicus).